The primary structure comprises 127 residues: Small ribosomal subunit protein uS11 (127 aa).

Belongs to the universal ribosomal protein uS11 family. In terms of assembly, part of the 30S ribosomal subunit. Interacts with proteins S7 and S18. Binds to IF-3.

In terms of biological role, located on the platform of the 30S subunit, it bridges several disparate RNA helices of the 16S rRNA. Forms part of the Shine-Dalgarno cleft in the 70S ribosome. The protein is Small ribosomal subunit protein uS11 of Anaeromyxobacter sp. (strain Fw109-5).